The following is a 191-amino-acid chain: Small ribosomal subunit protein eS7 (191 aa).

An N-acetylmethionine modification is found at Met-1.

This sequence belongs to the eukaryotic ribosomal protein eS7 family.

The sequence is that of Small ribosomal subunit protein eS7 (RPS7) from Brassica oleracea (Wild cabbage).